Reading from the N-terminus, the 264-residue chain is Small ribosomal subunit protein eS1 (264 aa).

At lysine 34 the chain carries N6-acetyllysine; alternate. Lysine 34 is covalently cross-linked (Glycyl lysine isopeptide (Lys-Gly) (interchain with G-Cter in SUMO2); alternate). Lysine 56 is subject to N6-acetyllysine. Tyrosine 155 carries the post-translational modification ADP-ribosyltyrosine. The segment at 233–264 (GEGGSSGKAAGDETGAKVERADGYEPPVQESV) is disordered. Phosphoserine is present on serine 237. The segment covering 242–255 (AGDETGAKVERADG) has biased composition (basic and acidic residues). The residue at position 249 (lysine 249) is an N6-acetyllysine; alternate. Lysine 249 participates in a covalent cross-link: Glycyl lysine isopeptide (Lys-Gly) (interchain with G-Cter in SUMO2); alternate. A Phosphotyrosine modification is found at tyrosine 256. At serine 263 the chain carries Phosphoserine.

The protein belongs to the eukaryotic ribosomal protein eS1 family. Component of the small ribosomal subunit. Mature ribosomes consist of a small (40S) and a large (60S) subunit. The 40S subunit contains about 33 different proteins and 1 molecule of RNA (18S). The 60S subunit contains about 49 different proteins and 3 molecules of RNA (28S, 5.8S and 5S). Identified in a IGF2BP1-dependent mRNP granule complex containing untranslated mRNAs. Binds with high affinity to IPO4. Interacts with DDIT3. Part of the small subunit (SSU) processome, composed of more than 70 proteins and the RNA chaperone small nucleolar RNA (snoRNA) U3. ADP-ribosylated at Tyr-155 by PARP1 in presence of HPF1.

It localises to the cytoplasm. The protein localises to the nucleus. The protein resides in the nucleolus. In terms of biological role, component of the small ribosomal subunit. The ribosome is a large ribonucleoprotein complex responsible for the synthesis of proteins in the cell. Part of the small subunit (SSU) processome, first precursor of the small eukaryotic ribosomal subunit. During the assembly of the SSU processome in the nucleolus, many ribosome biogenesis factors, an RNA chaperone and ribosomal proteins associate with the nascent pre-rRNA and work in concert to generate RNA folding, modifications, rearrangements and cleavage as well as targeted degradation of pre-ribosomal RNA by the RNA exosome. May play a role during erythropoiesis through regulation of transcription factor DDIT3. The sequence is that of Small ribosomal subunit protein eS1 (Rps3a) from Mus musculus (Mouse).